The sequence spans 208 residues: Protein-L-isoaspartate O-methyltransferase (208 aa).

Residue Ser59 is part of the active site.

The protein belongs to the methyltransferase superfamily. L-isoaspartyl/D-aspartyl protein methyltransferase family.

The protein resides in the cytoplasm. It catalyses the reaction [protein]-L-isoaspartate + S-adenosyl-L-methionine = [protein]-L-isoaspartate alpha-methyl ester + S-adenosyl-L-homocysteine. In terms of biological role, catalyzes the methyl esterification of L-isoaspartyl residues in peptides and proteins that result from spontaneous decomposition of normal L-aspartyl and L-asparaginyl residues. It plays a role in the repair and/or degradation of damaged proteins. The protein is Protein-L-isoaspartate O-methyltransferase of Klebsiella pneumoniae (strain 342).